The following is a 59-amino-acid chain: MEKMNNIAGITPENELDEMFDDSVVGAVGYTTYWGILPLVTKNPQICPVSENTVKCRLL.

The propeptide at 1 to 27 is cleaved by FlvT; it reads MEKMNNIAGITPENELDEMFDDSVVGA. A 2,3-didehydrobutyrine; by FlvM2 mark is found at T31 and T32. 2 cross-links (beta-methyllanthionine (Thr-Cys); by FlvM2) span residues 41–47 and 53–56; these read TKNPQIC and TVKC.

Post-translationally, contains DL-beta-methyllanthionine, when coepressed in E.coli with the flavecin synthetase FlvM2.

It is found in the secreted. In terms of biological role, lanthionine-containing peptide that does probably not show antibacterial activity, since its analog [+7]Flvbeta.f does not show antibacterial activity against M.luteus. Also does not show antibiotic activity when tested with [Del2]Flvalpha.a, an analog of Flvalpha.a, which is encoded by the same operon than Flvbeta.f. The bactericidal activity of lantibiotics is based on depolarization of energized bacterial cytoplasmic membranes, initiated by the formation of aqueous transmembrane pores. The protein is Lantipeptide Flvbeta.f of Ruminococcus flavefaciens.